A 311-amino-acid chain; its full sequence is Triacylglycerol lipase (311 aa).

An N-terminal signal peptide occupies residues 1-26 (MKKKSLLPLGLAIGLASLAASPLIQA). Positions 35–280 (PIVLAHGMLG…DNYRMNHLDE (246 aa)) constitute an AB hydrolase-1 domain. Residue Met42 coordinates substrate. Ser108 serves as the catalytic Nucleophile. His109 provides a ligand contact to substrate. A disulfide bridge connects residues Cys209 and Cys261. Ca(2+) is bound at residue Asp235. Residues Asp255 and His277 each act as charge relay system in the active site. Asp279, Gln283, and Leu287 together coordinate Ca(2+).

Belongs to the AB hydrolase superfamily. Pseudomonas lipase family. Monomer. The cofactor is Ca(2+).

It is found in the secreted. It carries out the reaction a triacylglycerol + H2O = a diacylglycerol + a fatty acid + H(+). In terms of biological role, catalyzes the hydrolysis of triacylglycerol. Also able to catalyze, in anhydrous organic solvents, intramolecular transesterification of omega-hydroxyfatty acid esters to form macrocyclic lactones. This biosynthesis is dependent on the chain length of the substrates, and the formation of monomer lactone is maximum with methyl 18-hydroxyoctadecanoate. With shorter substrates, monomer lactone decreases and the formation of diolide (dimer lactone) increases. This is Triacylglycerol lipase from Pseudomonas sp. (strain 109).